The following is a 349-amino-acid chain: UDP-N-acetylenolpyruvoylglucosamine reductase (349 aa).

One can recognise an FAD-binding PCMH-type domain in the interval 25 to 197 (GIAATARYAA…VAVTFRLPKR (173 aa)). R173 is a catalytic residue. S249 functions as the Proton donor in the catalytic mechanism. E345 is a catalytic residue.

Belongs to the MurB family. FAD serves as cofactor.

The protein localises to the cytoplasm. The enzyme catalyses UDP-N-acetyl-alpha-D-muramate + NADP(+) = UDP-N-acetyl-3-O-(1-carboxyvinyl)-alpha-D-glucosamine + NADPH + H(+). It functions in the pathway cell wall biogenesis; peptidoglycan biosynthesis. Cell wall formation. This is UDP-N-acetylenolpyruvoylglucosamine reductase from Burkholderia vietnamiensis (strain G4 / LMG 22486) (Burkholderia cepacia (strain R1808)).